Here is a 180-residue protein sequence, read N- to C-terminus: ADP-ribosylation factor 4 (180 aa).

A lipid anchor (N-myristoyl glycine) is attached at Gly-2. Residues 24–31 (GLDAAGKT), 67–71 (DVGGQ), and 126–129 (NKQD) each bind GTP.

Belongs to the small GTPase superfamily. Arf family.

It is found in the golgi apparatus. In terms of biological role, GTP-binding protein involved in protein trafficking; may modulate vesicle budding and uncoating within the Golgi apparatus. May be involved in ciliogenesis. The polypeptide is ADP-ribosylation factor 4 (arf4) (Xenopus laevis (African clawed frog)).